The primary structure comprises 231 residues: MPVKLATALSNNLFPALDSQLRAGRHIGIEELENHVFLMDFQEVLEEFYSRYNVELIRAPEGFFYLRPRSTTLIPRSVLSELDMMVGKILCYLYLSPERLAHEGIFSQQELYEELLSLADESKLLKLVNQRSTGSDLDRQKLQEKVRTSLNRLRRLGMIYFMGNDSSKFRITESVFRFGADVRSGDDAREAQLRMIRDGEAMPVEGSLSLKDDSDDNDRTDDTAPETGEDE.

A disordered region spans residues 195–231 (MIRDGEAMPVEGSLSLKDDSDDNDRTDDTAPETGEDE). The segment covering 213–231 (DSDDNDRTDDTAPETGEDE) has biased composition (acidic residues).

Belongs to the MukE family. In terms of assembly, interacts, and probably forms a ternary complex, with MukF and MukB. The complex formation is stimulated by calcium or magnesium.

The protein localises to the cytoplasm. It is found in the nucleoid. Involved in chromosome condensation, segregation and cell cycle progression. May participate in facilitating chromosome segregation by condensation DNA from both sides of a centrally located replisome during cell division. Probably acts via its interaction with MukB and MukF. This Pectobacterium atrosepticum (strain SCRI 1043 / ATCC BAA-672) (Erwinia carotovora subsp. atroseptica) protein is Chromosome partition protein MukE.